A 493-amino-acid chain; its full sequence is MQNNKDNYLKFTKMDKKSIRAPYDQNDLSKKIQRIKKREDIFLLYKINNIITEHTLLQPKQRILIAVSGGQDSICLLRILFDLQRKWSWKLGIIHCDHRWNSRSKIQAEHVACLAINLQINYHEGIAIESVQKESIARLWRYNVIQSVAISNNYTAIITGHNASDRIETLLYNLMRGSGLHGLQSIKWKRNLCFSHFTRSVLSKIKFSFLVKKLKFIKTFMDHEDFQGNHFFFLKKRKQLHLIRPFLETTRTEIRNILTIWNFPSWPDVSNKELRIRRNRIRHRVIPYIRIHYNPNIDQTLVRWAEIVQSETFYLEQLTNYILFKIEIKKKISSISLKIPLEQLRKQKEPSEEKLNFYQSAIPVDLLRSLPVAIQRRVLKQYIYINTNRILGFQYIEQIRLSCLFSLQDSLRKFLHRHRCRPIYLSEHISTHSMKSSTSDTCIDWKGPKEKKKLVTPWLIFPGGIKFLIRKNYLFIFSPKNSSLTIKRPRIEQ.

Ser68–Ser73 is an ATP binding site.

It belongs to the tRNA(Ile)-lysidine synthase family.

Its subcellular location is the plastid. It localises to the chloroplast. It carries out the reaction cytidine(34) in tRNA(Ile2) + L-lysine + ATP = lysidine(34) in tRNA(Ile2) + AMP + diphosphate + H(+). Functionally, ligates lysine onto the cytidine present at position 34 of the AUA codon-specific tRNA(Ile) that contains the anticodon CAU, in an ATP-dependent manner. Cytidine is converted to lysidine, thus changing the amino acid specificity of the tRNA from methionine to isoleucine. This chain is tRNA(Ile)-lysidine synthase, chloroplastic, found in Staurastrum punctulatum (Green alga).